Here is a 423-residue protein sequence, read N- to C-terminus: Adenylosuccinate synthetase (423 aa).

GTP is bound by residues Gly-12–Lys-18 and Gly-40–Thr-42. Asp-13 serves as the catalytic Proton acceptor. Mg(2+) contacts are provided by Asp-13 and Gly-40. Residues Asp-13–Lys-16, Asn-38–His-41, Thr-129, Arg-143, Gln-224, Thr-239, and Arg-303 contribute to the IMP site. His-41 functions as the Proton donor in the catalytic mechanism. Ser-299–Arg-305 serves as a coordination point for substrate. Residues Arg-305, Lys-331–Asp-333, and Ser-412–Gly-414 each bind GTP.

This sequence belongs to the adenylosuccinate synthetase family. In terms of assembly, homodimer. Requires Mg(2+) as cofactor.

Its subcellular location is the cytoplasm. It carries out the reaction IMP + L-aspartate + GTP = N(6)-(1,2-dicarboxyethyl)-AMP + GDP + phosphate + 2 H(+). Its pathway is purine metabolism; AMP biosynthesis via de novo pathway; AMP from IMP: step 1/2. Functionally, plays an important role in the de novo pathway of purine nucleotide biosynthesis. Catalyzes the first committed step in the biosynthesis of AMP from IMP. The chain is Adenylosuccinate synthetase from Flavobacterium psychrophilum (strain ATCC 49511 / DSM 21280 / CIP 103535 / JIP02/86).